A 710-amino-acid polypeptide reads, in one-letter code: Pentatricopeptide repeat-containing protein At3g14330 (710 aa).

PPR repeat units lie at residues 166–196 (NPKLLSKLITLFSVCRRLDLARKIFDDVTDS), 200–234 (TEKVWAAMAIGYSRNGSPRDALIVYVDMLCSFIEP), 235–269 (GNFSISVALKACVDLKDLRVGRGIHAQIVKRKEKV), 270–304 (DQVVYNVLLKLYMESGLFDDARKVFDGMSERNVVT), 305–331 (WNSLISVLSKKVRVHEMFNLFRKMQEE), 336–370 (SWATLTTILPACSRVAALLTGKEIHAQILKSKEKP), 371–401 (DVPLLNSLMDMYGKCGEVEYSRRVFDVMLTK), 402–436 (DLASWNIMLNCYAINGNIEEVINLFEWMIESGVAP), 437–467 (DGITFVALLSGCSDTGLTEYGLSLFERMKTE), and 473–503 (ALEHYACLVDILGRAGKIKEAVKVIETMPFK). Residues 508–583 (IWGSLLNSCR…EAGCSWVQVK (76 aa)) are type E motif. Residues 584-615 (DKIQIFVAGGGYEFRNSDEYKKVWTELQEAIE) are type E(+) motif. Residues 616-710 (KSGYSPNTSV…DGICSCKDYW (95 aa)) form a type DYW motif region.

The protein belongs to the PPR family. PCMP-H subfamily.

The polypeptide is Pentatricopeptide repeat-containing protein At3g14330 (PCMP-H57) (Arabidopsis thaliana (Mouse-ear cress)).